The sequence spans 185 residues: Probable dehydrin LEA (185 aa).

Composition is skewed to basic and acidic residues over residues 1-10 (MADLRDEKGN) and 44-55 (QHKESTTSDIAE). Residues 1–185 (MADLRDEKGN…LPGHHNHNHP (185 aa)) are disordered. Low complexity predominate over residues 67-94 (AAAPAGAGAATAATATGVSAGTGATTTG). A compositionally biased stretch (basic and acidic residues) spans 130-146 (KEKIKEKFGSGKHKDEQ). A compositionally biased stretch (low complexity) spans 147-159 (TPATATTTGPATT). The span at 161–177 (QPHEKKGILEKIKDKLP) shows a compositional bias: basic and acidic residues.

The protein belongs to the plant dehydrin family.

This chain is Probable dehydrin LEA (LEA), found in Arabidopsis thaliana (Mouse-ear cress).